The following is a 340-amino-acid chain: Homeobox protein DBX2 (340 aa).

The segment at residues 185 to 244 (GILRRAVFSEDQRKALEKMFQKQKYISKTDRKKLAINLGLKESQVKIWFQNRRMKWRNSK) is a DNA-binding region (homeobox). Positions 283 to 313 (QQHPSPGWRENSPEPSERLIQGSPGAEALPP) are disordered.

It belongs to the H2.0 homeobox family.

It is found in the nucleus. In Bos taurus (Bovine), this protein is Homeobox protein DBX2 (DBX2).